Consider the following 268-residue polypeptide: Small ribosomal subunit protein eS1 (268 aa).

This sequence belongs to the eukaryotic ribosomal protein eS1 family. As to quaternary structure, component of the small ribosomal subunit. Mature ribosomes consist of a small (40S) and a large (60S) subunit. The 40S subunit contains about 33 different proteins and 1 molecule of RNA (18S). The 60S subunit contains about 49 different proteins and 3 molecules of RNA (28S, 5.8S and 5S).

The protein resides in the cytoplasm. The chain is Small ribosomal subunit protein eS1 from Artemia franciscana (Brine shrimp).